The sequence spans 262 residues: uncharacterized protein (262 aa).

The protein belongs to the BtpA family.

This is an uncharacterized protein from Pyrococcus furiosus (strain ATCC 43587 / DSM 3638 / JCM 8422 / Vc1).